Here is a 643-residue protein sequence, read N- to C-terminus: 1-deoxy-D-xylulose-5-phosphate synthase (643 aa).

Thiamine diphosphate contacts are provided by residues His78 and 119–121; that span reads AHS. Asp150 is a binding site for Mg(2+). Thiamine diphosphate-binding positions include 151–152, Asn179, Tyr288, and Glu370; that span reads GS. Mg(2+) is bound at residue Asn179.

Belongs to the transketolase family. DXPS subfamily. As to quaternary structure, homodimer. The cofactor is Mg(2+). Thiamine diphosphate is required as a cofactor.

The enzyme catalyses D-glyceraldehyde 3-phosphate + pyruvate + H(+) = 1-deoxy-D-xylulose 5-phosphate + CO2. Its pathway is metabolic intermediate biosynthesis; 1-deoxy-D-xylulose 5-phosphate biosynthesis; 1-deoxy-D-xylulose 5-phosphate from D-glyceraldehyde 3-phosphate and pyruvate: step 1/1. Catalyzes the acyloin condensation reaction between C atoms 2 and 3 of pyruvate and glyceraldehyde 3-phosphate to yield 1-deoxy-D-xylulose-5-phosphate (DXP). This is 1-deoxy-D-xylulose-5-phosphate synthase from Brucella canis (strain ATCC 23365 / NCTC 10854 / RM-666).